A 73-amino-acid polypeptide reads, in one-letter code: Large ribosomal subunit protein bL31 (73 aa).

Residues C16, C18, C38, and C41 each contribute to the Zn(2+) site.

The protein belongs to the bacterial ribosomal protein bL31 family. Type A subfamily. In terms of assembly, part of the 50S ribosomal subunit. It depends on Zn(2+) as a cofactor.

Binds the 23S rRNA. This Vibrio parahaemolyticus serotype O3:K6 (strain RIMD 2210633) protein is Large ribosomal subunit protein bL31.